The primary structure comprises 387 residues: Lactosylceramide alpha-2,3-sialyltransferase (387 aa).

Over 1 to 33 (MPNEFTSAKLRSDCSRTSLQWYTQTQHKMRRPS) the chain is Cytoplasmic. The chain crosses the membrane as a helical; Signal-anchor for type II membrane protein span at residues 34 to 54 (LLLKDILKCMLVVFGVWLLYI). The Extracellular segment spans residues 55–387 (LKLNYTAEEC…VVQDLSGGIH (333 aa)). N-linked (GlcNAc...) asparagine glycosylation is found at asparagine 58 and asparagine 208. Cysteine 167 and cysteine 325 are joined by a disulfide.

Belongs to the glycosyltransferase 29 family.

The protein localises to the golgi apparatus membrane. It carries out the reaction a beta-D-Gal-(1-&gt;4)-beta-D-Glc-(1&lt;-&gt;1)-Cer(d18:1(4E)) + CMP-N-acetyl-beta-neuraminate = a ganglioside GM3 (d18:1(4E)) + CMP + H(+). The enzyme catalyses ganglioside GA2 (d18:1(4E)/18:0) + CMP-N-acetyl-beta-neuraminate = ganglioside GM2 (d18:1(4E)/18:0) + CMP + H(+). It catalyses the reaction a beta-D-Gal-(1&lt;-&gt;1')-ceramide + CMP-N-acetyl-beta-neuraminate = N-acetyl-alpha-neuraminosyl-(2-&gt;3)-beta-D-galactosyl-(1&lt;-&gt;1')-ceramide + CMP + H(+). The catalysed reaction is ganglioside GA1 (d18:1(4E)/18:0) + CMP-N-acetyl-beta-neuraminate = ganglioside GM1 (d18:1(4E)/18:0) + CMP + H(+). In terms of biological role, transfers the sialyl group (N-acetyl-alpha-neuraminyl or NeuAc) from CMP-NeuAc to the non-reducing terminal galactose (Gal) of glycosphingolipids forming gangliosides (important molecules involved in the regulation of multiple cellular processes, including cell proliferation and differentiation, apoptosis, embryogenesis, development, and oncogenesis). Mainly involved in the biosynthesis of ganglioside GM3 but can also use different glycolipids as substrate acceptors such as D-galactosylceramide (GalCer), asialo-GM2 (GA2) and asialo-GM1 (GA1), although less preferentially than beta-D-Gal-(1-&gt;4)-beta-D-Glc-(1&lt;-&gt;1)-Cer (LacCer). The chain is Lactosylceramide alpha-2,3-sialyltransferase (St3gal5) from Rattus norvegicus (Rat).